We begin with the raw amino-acid sequence, 108 residues long: Trp operon repressor homolog (108 aa).

The DNA-binding element occupies 59-82; sequence QRQISQLLGVGVATITRGSNELKS.

The protein belongs to the TrpR family. Homodimer.

The protein resides in the cytoplasm. Its function is as follows. This protein is an aporepressor. When complexed with L-tryptophan it binds the operator region of the trp operon and prevents the initiation of transcription. The sequence is that of Trp operon repressor homolog from Aliivibrio fischeri (strain MJ11) (Vibrio fischeri).